A 182-amino-acid polypeptide reads, in one-letter code: MSDNLALHGTTILCLKKNEEIIIAADGQVSHGNTVLKSTARKLRTIANNKIIVGFAGSTADGLALFEKLEIKIEQYNSNLLRSAVELAKDWRNDKYLRRLEAMMIVADRSHILILTGNGDVIEPENNIAAIGSGGLFALSAARALMSYENNLTAEEIALKSMNIAADLCVFSNHNIIMEKVV.

Thr-10 is a catalytic residue. Residues Ala-166, Cys-169, and Ser-172 each contribute to the Na(+) site.

The protein belongs to the peptidase T1B family. HslV subfamily. A double ring-shaped homohexamer of HslV is capped on each side by a ring-shaped HslU homohexamer. The assembly of the HslU/HslV complex is dependent on binding of ATP.

The protein localises to the cytoplasm. It carries out the reaction ATP-dependent cleavage of peptide bonds with broad specificity.. Its activity is regulated as follows. Allosterically activated by HslU binding. Functionally, protease subunit of a proteasome-like degradation complex believed to be a general protein degrading machinery. The polypeptide is ATP-dependent protease subunit HslV (Rickettsia typhi (strain ATCC VR-144 / Wilmington)).